The sequence spans 298 residues: Golgi to ER traffic protein 2 (298 aa).

At 1–164 (MSEPVVDTAE…LEYNTYNQKL (164 aa)) the chain is on the cytoplasmic side. A disordered region spans residues 40-92 (ILSQGSSVKTSGVKSVLDQEKEATPSHDEDPEIQDITEITTPPPRTPPIGEDA). Over residues 42 to 55 (SQGSSVKTSGVKSV) the composition is skewed to low complexity. Over residues 56-67 (LDQEKEATPSHD) the composition is skewed to basic and acidic residues. Residues 165–185 (WKFRFLLVRVSVTLFNFFYHY) traverse the membrane as a helical segment. At 186-211 (INLSNFHASNYAYVRDLSSEKYPVRD) the chain is on the lumenal side. The chain crosses the membrane as a helical span at residues 212 to 231 (FFTWFATTEVVLVAAYYSIF). Topologically, residues 232-275 (HSLGLFHAANQNSFVLKAMSMGSMVLPQLEHYKPLVARFLGYYE) are cytoplasmic. The chain crosses the membrane as a helical span at residues 276–296 (LLGIVLGDLSLVIVLFGLLSF). Over 297–298 (AN) the chain is Lumenal.

Belongs to the GET2 family. As to quaternary structure, component of the Golgi to ER traffic (GET) complex, which is composed of GET1, GET2 and GET3. Within the complex, GET1 and GET2 form a heterotetramer which is stabilized by phosphatidylinositol binding and which binds to the GET3 homodimer.

Its subcellular location is the endoplasmic reticulum membrane. It is found in the golgi apparatus membrane. Its function is as follows. Required for the post-translational delivery of tail-anchored (TA) proteins to the endoplasmic reticulum. Together with GET1, acts as a membrane receptor for soluble GET3, which recognizes and selectively binds the transmembrane domain of TA proteins in the cytosol. The GET complex cooperates with the HDEL receptor ERD2 to mediate the ATP-dependent retrieval of resident ER proteins that contain a C-terminal H-D-E-L retention signal from the Golgi to the ER. The polypeptide is Golgi to ER traffic protein 2 (Candida albicans (strain SC5314 / ATCC MYA-2876) (Yeast)).